A 329-amino-acid chain; its full sequence is Malate dehydrogenase (329 aa).

11–17 (GAAGQIA) is a binding site for NAD(+). Residues R92 and R98 each coordinate substrate. NAD(+)-binding positions include N105, Q112, and 129–131 (VGN). Residues N131 and R162 each contribute to the substrate site. The active-site Proton acceptor is the H187.

It belongs to the LDH/MDH superfamily. MDH type 2 family.

It carries out the reaction (S)-malate + NAD(+) = oxaloacetate + NADH + H(+). In terms of biological role, catalyzes the reversible oxidation of malate to oxaloacetate. This is Malate dehydrogenase from Akkermansia muciniphila (strain ATCC BAA-835 / DSM 22959 / JCM 33894 / BCRC 81048 / CCUG 64013 / CIP 107961 / Muc).